The sequence spans 776 residues: Mitochondrial intermediate peptidase (776 aa).

The N-terminal 38 residues, 1–38 (MLNSARTVLARHSARQLYRFRGCLVHQQRHRHQVQRTL), are a transit peptide targeting the mitochondrion. A Zn(2+)-binding site is contributed by His-560. Glu-561 is a catalytic residue. Zn(2+) is bound by residues His-564 and His-567.

The protein belongs to the peptidase M3 family. Requires Zn(2+) as cofactor.

Its subcellular location is the mitochondrion matrix. It catalyses the reaction Release of an N-terminal octapeptide as second stage of processing of some proteins imported into the mitochondrion.. In terms of biological role, cleaves proteins, imported into the mitochondrion, to their mature size. While most mitochondrial precursor proteins are processed to the mature form in one step by mitochondrial processing peptidase (MPP), the sequential cleavage by MIP of an octapeptide after initial processing by MPP is a required step for a subgroup of nuclear-encoded precursor proteins destined for the matrix or the inner membrane. The polypeptide is Mitochondrial intermediate peptidase (OCT1) (Coprinopsis cinerea (strain Okayama-7 / 130 / ATCC MYA-4618 / FGSC 9003) (Inky cap fungus)).